A 92-amino-acid chain; its full sequence is Small ribosomal subunit protein uS15 (92 aa).

This sequence belongs to the universal ribosomal protein uS15 family. In terms of assembly, part of the 30S ribosomal subunit. Forms a bridge to the 50S subunit in the 70S ribosome, contacting the 23S rRNA.

Functionally, one of the primary rRNA binding proteins, it binds directly to 16S rRNA where it helps nucleate assembly of the platform of the 30S subunit by binding and bridging several RNA helices of the 16S rRNA. Forms an intersubunit bridge (bridge B4) with the 23S rRNA of the 50S subunit in the ribosome. This chain is Small ribosomal subunit protein uS15, found in Symbiobacterium thermophilum (strain DSM 24528 / JCM 14929 / IAM 14863 / T).